A 434-amino-acid polypeptide reads, in one-letter code: Eukaryotic translation initiation factor 3 subunit E (434 aa).

Positions 219 to 392 (FFNHPKGRDL…GHVVMGTQPL (174 aa)) constitute a PCI domain.

It belongs to the eIF-3 subunit E family. As to quaternary structure, component of the eukaryotic translation initiation factor 3 (eIF-3) complex. The eIF-3 complex interacts with pix. Interacts with mxt.

It is found in the cytoplasm. In terms of biological role, component of the eukaryotic translation initiation factor 3 (eIF-3) complex, which is involved in protein synthesis of a specialized repertoire of mRNAs and, together with other initiation factors, stimulates binding of mRNA and methionyl-tRNAi to the 40S ribosome. The eIF-3 complex specifically targets and initiates translation of a subset of mRNAs involved in cell proliferation. The chain is Eukaryotic translation initiation factor 3 subunit E (eIF3-S6) from Drosophila pseudoobscura pseudoobscura (Fruit fly).